Here is a 132-residue protein sequence, read N- to C-terminus: Small ribosomal subunit protein uS8 (132 aa).

Belongs to the universal ribosomal protein uS8 family. Part of the 30S ribosomal subunit. Contacts proteins S5 and S12.

Its function is as follows. One of the primary rRNA binding proteins, it binds directly to 16S rRNA central domain where it helps coordinate assembly of the platform of the 30S subunit. This chain is Small ribosomal subunit protein uS8, found in Syntrophotalea carbinolica (strain DSM 2380 / NBRC 103641 / GraBd1) (Pelobacter carbinolicus).